We begin with the raw amino-acid sequence, 376 residues long: Cinnamyl alcohol dehydrogenase 2 (376 aa).

Cys44 serves as a coordination point for Zn(2+). Residue Ser46 coordinates NADP(+). The Zn(2+) site is built by His66, Glu67, Cys97, Cys100, Cys103, Cys111, and Cys161. NADP(+) contacts are provided by residues Thr165, 187–192, 210–215, Thr250, Gly274, and 297–299; these read GLGGLG, SRSSEK, and SQI.

The protein belongs to the zinc-containing alcohol dehydrogenase family. Homodimer. Requires Zn(2+) as cofactor. In terms of tissue distribution, expressed at the base of the stems.

The catalysed reaction is (E)-cinnamyl alcohol + NADP(+) = (E)-cinnamaldehyde + NADPH + H(+). It carries out the reaction (E)-coniferol + NADP(+) = (E)-coniferaldehyde + NADPH + H(+). The enzyme catalyses (E)-sinapyl alcohol + NADP(+) = (E)-sinapaldehyde + NADPH + H(+). It catalyses the reaction (E)-4-coumaroyl alcohol + NADP(+) = (E)-4-coumaraldehyde + NADPH + H(+). The catalysed reaction is (E)-caffeyl alcohol + NADP(+) = (E)-caffeyl aldehyde + NADPH + H(+). It functions in the pathway aromatic compound metabolism; phenylpropanoid biosynthesis. Functionally, involved in lignin biosynthesis. Catalyzes the final step specific for the production of lignin monomers. Catalyzes the NADPH-dependent reduction of coniferaldehyde, 5-hydroxyconiferaldehyde, sinapaldehyde, 4-coumaraldehyde and caffeyl aldehyde to their respective alcohols. In Arabidopsis thaliana (Mouse-ear cress), this protein is Cinnamyl alcohol dehydrogenase 2.